A 503-amino-acid chain; its full sequence is Ell-associated factor Eaf (503 aa).

2 stretches are compositionally biased toward polar residues: residues 119–145 and 167–186; these read TRNE…NQGA and ENST…SRRN. Disordered stretches follow at residues 119–220, 250–360, and 372–503; these read TRNE…PAWD, GHAN…SQSV, and GGVL…DDDD. The residue at position 196 (Ser-196) is a Phosphoserine. Over residues 202–215 the composition is skewed to low complexity; the sequence is SPSRPVPVHRSPQS. 2 stretches are compositionally biased toward polar residues: residues 250–273 and 298–307; these read GHAN…STHI and MAQQQQQHPS. The span at 308–337 shows a compositional bias: low complexity; the sequence is NYGRGYNGGHNHAQQQQQQQRNSPPRQRPS. Positions 385-400 are enriched in acidic residues; it reads DSSDSDSGSDSDDSTE. Low complexity-rich tracts occupy residues 406–437, 454–472, and 487–497; these read QGQQ…HHNQ, HQQQ…QKQQ, and LQNDLQLSSNS.

Belongs to the EAF family.

The protein resides in the nucleus. Promotes transcriptional elongation by Su(Tpl)/ELL. Essential for development. The protein is Ell-associated factor Eaf of Drosophila sechellia (Fruit fly).